The primary structure comprises 601 residues: Elongation factor 4 (601 aa).

The tr-type G domain maps to Asn6–Lys188. Residues Asp18–Thr23 and Asn135–Asp138 each bind GTP.

This sequence belongs to the TRAFAC class translation factor GTPase superfamily. Classic translation factor GTPase family. LepA subfamily.

The protein resides in the cell membrane. The catalysed reaction is GTP + H2O = GDP + phosphate + H(+). Its function is as follows. Required for accurate and efficient protein synthesis under certain stress conditions. May act as a fidelity factor of the translation reaction, by catalyzing a one-codon backward translocation of tRNAs on improperly translocated ribosomes. Back-translocation proceeds from a post-translocation (POST) complex to a pre-translocation (PRE) complex, thus giving elongation factor G a second chance to translocate the tRNAs correctly. Binds to ribosomes in a GTP-dependent manner. This chain is Elongation factor 4, found in Desulforamulus reducens (strain ATCC BAA-1160 / DSM 100696 / MI-1) (Desulfotomaculum reducens).